The following is a 170-amino-acid chain: Peptide deformylase (170 aa).

Positions 91 and 133 each coordinate Fe cation. Glu134 is an active-site residue. His137 lines the Fe cation pocket.

It belongs to the polypeptide deformylase family. It depends on Fe(2+) as a cofactor.

It carries out the reaction N-terminal N-formyl-L-methionyl-[peptide] + H2O = N-terminal L-methionyl-[peptide] + formate. Removes the formyl group from the N-terminal Met of newly synthesized proteins. Requires at least a dipeptide for an efficient rate of reaction. N-terminal L-methionine is a prerequisite for activity but the enzyme has broad specificity at other positions. This is Peptide deformylase from Yersinia enterocolitica serotype O:8 / biotype 1B (strain NCTC 13174 / 8081).